The chain runs to 88 residues: Small ribosomal subunit protein bS20 (88 aa).

The tract at residues 1–20 (MPNIKSAIKRTKTNNERRAH) is disordered.

Belongs to the bacterial ribosomal protein bS20 family.

Its function is as follows. Binds directly to 16S ribosomal RNA. This chain is Small ribosomal subunit protein bS20, found in Bacillus velezensis (strain DSM 23117 / BGSC 10A6 / LMG 26770 / FZB42) (Bacillus amyloliquefaciens subsp. plantarum).